The chain runs to 440 residues: Xaa-Pro dipeptidase (440 aa).

Mn(2+)-binding residues include D244, D255, H336, E381, and E420.

The protein belongs to the peptidase M24B family. Bacterial-type prolidase subfamily. It depends on Mn(2+) as a cofactor.

It carries out the reaction Xaa-L-Pro dipeptide + H2O = an L-alpha-amino acid + L-proline. Its function is as follows. Splits dipeptides with a prolyl residue in the C-terminal position. The polypeptide is Xaa-Pro dipeptidase (Pseudoalteromonas translucida (strain TAC 125)).